The chain runs to 198 residues: Protein GrpE (198 aa).

Belongs to the GrpE family. Homodimer.

The protein resides in the cytoplasm. Participates actively in the response to hyperosmotic and heat shock by preventing the aggregation of stress-denatured proteins, in association with DnaK and GrpE. It is the nucleotide exchange factor for DnaK and may function as a thermosensor. Unfolded proteins bind initially to DnaJ; upon interaction with the DnaJ-bound protein, DnaK hydrolyzes its bound ATP, resulting in the formation of a stable complex. GrpE releases ADP from DnaK; ATP binding to DnaK triggers the release of the substrate protein, thus completing the reaction cycle. Several rounds of ATP-dependent interactions between DnaJ, DnaK and GrpE are required for fully efficient folding. The protein is Protein GrpE of Vibrio harveyi (Beneckea harveyi).